The chain runs to 352 residues: Molybdenum import ATP-binding protein ModC (352 aa).

One can recognise an ABC transporter domain in the interval 1-229 (MLELNFSQTL…SVMNPWLPKE (229 aa)). 31 to 38 (GVSGAGKT) is an ATP binding site. The Mop domain maps to 289 to 352 (QTSIRNVLRA…AQIKSVSITA (64 aa)).

Belongs to the ABC transporter superfamily. Molybdate importer (TC 3.A.1.8) family. As to quaternary structure, the complex is composed of two ATP-binding proteins (ModC), two transmembrane proteins (ModB) and a solute-binding protein (ModA).

Its subcellular location is the cell inner membrane. It catalyses the reaction molybdate(out) + ATP + H2O = molybdate(in) + ADP + phosphate + H(+). Functionally, part of the ABC transporter complex ModABC involved in molybdenum import. Responsible for energy coupling to the transport system. In Escherichia coli O6:H1 (strain CFT073 / ATCC 700928 / UPEC), this protein is Molybdenum import ATP-binding protein ModC.